The sequence spans 89 residues: Small ribosomal subunit protein uS15 (89 aa).

The protein belongs to the universal ribosomal protein uS15 family. In terms of assembly, part of the 30S ribosomal subunit. Forms a bridge to the 50S subunit in the 70S ribosome, contacting the 23S rRNA.

One of the primary rRNA binding proteins, it binds directly to 16S rRNA where it helps nucleate assembly of the platform of the 30S subunit by binding and bridging several RNA helices of the 16S rRNA. Its function is as follows. Forms an intersubunit bridge (bridge B4) with the 23S rRNA of the 50S subunit in the ribosome. This is Small ribosomal subunit protein uS15 from Chlorobium phaeobacteroides (strain BS1).